Here is a 793-residue protein sequence, read N- to C-terminus: ABC transporter G family member 1 (793 aa).

Residues 1 to 20 are compositionally biased toward low complexity; sequence MDSNNNNNNENEAFSGASES. Residues 1–96 form a disordered region; it reads MDSNNNNNNE…NNNQNNNIIN (96 aa). A compositionally biased stretch (basic and acidic residues) spans 21-37; sequence SEFRKIVEENENEREFE. Residues 59–68 are compositionally biased toward polar residues; sequence ETINPNISLD. Residues 67 to 102 adopt a coiled-coil conformation; that stretch reads LDNNNNNNQNNQNNQNNNNNNNNQNNNIINNLNKKN. The segment covering 69–96 has biased composition (low complexity); the sequence is NNNNNNQNNQNNQNNNNNNNNQNNNIIN. Positions 123 to 364 constitute an ABC transporter domain; it reads VQITEKGKKK…FNANGYHCSE (242 aa). 156-163 contributes to the ATP binding site; the sequence is GPSGAGKT. Positions 382-398 are enriched in acidic residues; the sequence is DQADSDDDDYNDEEEEI. Residues 382-457 form a disordered region; sequence DQADSDDDDY…QSTDGRARRR (76 aa). Gly residues predominate over residues 399–413; the sequence is GGGGGGSGGGAGGIE. Residues 421–437 show a composition bias toward polar residues; it reads PTMNGSAVDNIKNNELK. The span at 438–448 shows a compositional bias: low complexity; sequence QQQQQQQQQQQ. One can recognise an ABC transmembrane type-2 domain in the interval 527–785; it reads MAFKVNLIQA…VLTFLVLKLK (259 aa). Helical transmembrane passes span 533–553, 563–583, 610–630, 647–667, 674–694, 701–721, and 764–784; these read LIQAIFQGLLCGIVYYQLGLG, VVAFIIMGVSFPAVMSTIHVF, FMDACIAVLLPMVTATIVYWM, FVLMLVLASQTCLSLGVLISS, VGTAVAPLIVILFFLFSGFFI, GWLVWFPYISFFRYMIEAAVI, and VWILVLYIIGFRVLTFLVLKL.

This sequence belongs to the ABC transporter superfamily. ABCG family.

The protein resides in the membrane. This chain is ABC transporter G family member 1 (abcG1), found in Dictyostelium discoideum (Social amoeba).